The following is a 225-amino-acid chain: Ribonuclease 3 (225 aa).

Residues 2–128 (LSTLIKKLKI…LFGAIYLDLG (127 aa)) form the RNase III domain. Glu-43 is a Mg(2+) binding site. Residue Asp-47 is part of the active site. Mg(2+) is bound by residues Asn-114 and Glu-117. Glu-117 is an active-site residue. In terms of domain architecture, DRBM spans 152-220 (DFKTQLQELV…ARYVLNILSK (69 aa)).

Belongs to the ribonuclease III family. Homodimer. Mg(2+) serves as cofactor.

Its subcellular location is the cytoplasm. The catalysed reaction is Endonucleolytic cleavage to 5'-phosphomonoester.. In terms of biological role, digests double-stranded RNA. Involved in the processing of primary rRNA transcript to yield the immediate precursors to the large and small rRNAs (23S and 16S). Processes some mRNAs, and tRNAs when they are encoded in the rRNA operon. Processes pre-crRNA and tracrRNA of type II CRISPR loci if present in the organism. The protein is Ribonuclease 3 of Phytoplasma mali (strain AT).